Reading from the N-terminus, the 212-residue chain is Protein G1-like7 (212 aa).

A compositionally biased stretch (low complexity) spans 1-22; the sequence is MDPSGPGPSSAAAGGAPAVAAA. Disordered regions lie at residues 1–34 and 148–212; these read MDPSGPGPSSAAAGGAPAVAAAPQPPAQLSRYES and KARG…PSAS. The ALOG domain maps to 31–158; sequence RYESQKRRDW…ARGIPYEKKK (128 aa). Positions 156-160 match the Nuclear localization signal motif; sequence KKKRK. The span at 167–182 shows a compositional bias: low complexity; the sequence is PAGVEPSGSSSAAAAA. A compositionally biased stretch (gly residues) spans 183–194; sequence AGGGDAGSGGGA. Residues 195–212 show a composition bias toward low complexity; the sequence is AATTTAQPGGSGTAPSAS.

The protein belongs to the plant homeotic and developmental regulators ALOG protein family.

It is found in the nucleus. Probable transcription regulator that acts as a developmental regulator by promoting cell growth in response to light. The protein is Protein G1-like7 (G1L7) of Oryza sativa subsp. japonica (Rice).